A 450-amino-acid polypeptide reads, in one-letter code: Phosphoglucosamine mutase (450 aa).

S107 acts as the Phosphoserine intermediate in catalysis. S107, D246, D248, and D250 together coordinate Mg(2+). At S107 the chain carries Phosphoserine.

The protein belongs to the phosphohexose mutase family. Mg(2+) is required as a cofactor. Activated by phosphorylation.

It catalyses the reaction alpha-D-glucosamine 1-phosphate = D-glucosamine 6-phosphate. Its function is as follows. Catalyzes the conversion of glucosamine-6-phosphate to glucosamine-1-phosphate. The sequence is that of Phosphoglucosamine mutase from Dechloromonas aromatica (strain RCB).